The sequence spans 410 residues: Gamma-glutamyl phosphate reductase (410 aa).

The protein belongs to the gamma-glutamyl phosphate reductase family.

It localises to the cytoplasm. It carries out the reaction L-glutamate 5-semialdehyde + phosphate + NADP(+) = L-glutamyl 5-phosphate + NADPH + H(+). Its pathway is amino-acid biosynthesis; L-proline biosynthesis; L-glutamate 5-semialdehyde from L-glutamate: step 2/2. Its function is as follows. Catalyzes the NADPH-dependent reduction of L-glutamate 5-phosphate into L-glutamate 5-semialdehyde and phosphate. The product spontaneously undergoes cyclization to form 1-pyrroline-5-carboxylate. This is Gamma-glutamyl phosphate reductase from Sulfurimonas denitrificans (strain ATCC 33889 / DSM 1251) (Thiomicrospira denitrificans (strain ATCC 33889 / DSM 1251)).